A 94-amino-acid polypeptide reads, in one-letter code: MLKPLGGRVALKIEEKGPTVGGFVLAGSAQEKTQTAQVVATGQGVCTLNGDLVAPSVKTGDRVLVEAHAGFDVKDGDEKYIIVGEANILAIIEE.

It belongs to the GroES chaperonin family. In terms of assembly, heptamer of 7 subunits arranged in a ring. Interacts with the chaperonin GroEL.

It is found in the cytoplasm. Together with the chaperonin GroEL, plays an essential role in assisting protein folding. The GroEL-GroES system forms a nano-cage that allows encapsulation of the non-native substrate proteins and provides a physical environment optimized to promote and accelerate protein folding. GroES binds to the apical surface of the GroEL ring, thereby capping the opening of the GroEL channel. This is Co-chaperonin GroES from Streptococcus pneumoniae (strain CGSP14).